The primary structure comprises 1364 residues: Serine protease SepA autotransporter (1364 aa).

Positions 1 to 56 are cleaved as a signal peptide; it reads MNKIYYLKYCHITKSLIAVSELARRVTCKSHRRLSRRVILTSVAALSLSSAWPALS. The Peptidase S6 domain maps to 57-307; that stretch reads ATVSAEIPYQ…VVTTQDFLGQ (251 aa). Residues histidine 134, aspartate 162, and serine 267 each act as charge relay system in the active site. The Autotransporter domain occupies 1098-1364; sequence DTQGDAGVWA…AINANFRYVF (267 aa).

Cleaved to release the mature protein from the outer membrane. Cleavage is performed by an unknown protease.

It localises to the periplasm. Its subcellular location is the secreted. It is found in the cell surface. The protein resides in the cell outer membrane. Inhibited by the serine protease inhibitor PMSF, but not by benzamidine, alpha 1-antitrypsin, alpha 1-antichymotrypsin. Not inhibited by metalloprotease inhibitors such as EDTA and orthophenanthroline. Functionally, major protein secreted in laboratory media showing proteolytic activity. May be involved in invasion and destruction of host intestinal epithelium. This chain is Serine protease SepA autotransporter (sepA), found in Shigella flexneri.